The sequence spans 49 residues: MSQKKVALECTKCGARNYTITANPQRQERLELRKFCKHCGEYTIHRESR.

It belongs to the bacterial ribosomal protein bL33 family.

This chain is Large ribosomal subunit protein bL33A, found in Limosilactobacillus reuteri subsp. reuteri (strain JCM 1112) (Lactobacillus reuteri).